The chain runs to 1287 residues: FYVE zinc finger domain protein UPA1 (1287 aa).

The segment at methionine 1 to glutamate 298 is disordered. A compositionally biased stretch (low complexity) spans aspartate 86–serine 99. Over residues tryptophan 115–alanine 136 the composition is skewed to polar residues. The short motif at serine 128–serine 144 is the PAM2 element. Basic and acidic residues-rich tracts occupy residues arginine 177–glutamine 187 and lysine 201–isoleucine 211. Positions proline 212–threonine 235 are enriched in polar residues. The short motif at alanine 239–alanine 253 is the PAM2L 1 element. A compositionally biased stretch (polar residues) spans serine 255 to serine 294. ANK repeat units follow at residues asparagine 366–glutamate 395, glutamate 400–alanine 429, aspartate 433–valine 463, and glycine 468–phenylalanine 497. Disordered stretches follow at residues asparagine 582 to proline 630, arginine 643 to glutamine 697, arginine 934 to serine 960, and threonine 977 to glutamate 1005. Polar residues predominate over residues serine 674–serine 695. The segment covering glycine 938 to phenylalanine 955 has biased composition (acidic residues). A PAM2L 2 motif is present at residues glutamate 941 to serine 960. Residues leucine 981–serine 995 are compositionally biased toward low complexity. The FYVE-type zinc-finger motif lies at aspartate 1055–glutamine 1129. Residues cysteine 1061, cysteine 1064, cysteine 1077, cysteine 1080, cysteine 1085, cysteine 1088, cysteine 1121, and cysteine 1124 each contribute to the Zn(2+) site. An RING-type; atypical zinc finger spans residues cysteine 1243–histidine 1283.

Belongs to the UPA1 PAM2 domain-binding protein family. Part of large ribonucleoprotein complexes (mRNPs) containing RNA-binding proteins RRM4 and PAB1, endosome-binding protein UPA1, core scaffold protein UPA2 and associated factor GRP1. Interacts (via PAM2 motif) with PAB1 (via PABC domain). Interacts (via PAM2L motifs) with RRM4.

It localises to the cytoplasm. The protein localises to the cytoskeleton. Its subcellular location is the endosome. Its function is as follows. FYVE zinc finger domain protein that functions in endosomal targeting and transport of mRNAs, as well as associated ribosomes. The endosomal mRNA transport regulates polarity of the infectious hyphae by transporting a broad spectrum of cargo mRNAs from the nucleus to cell poles. Involved in chitinase CTS1 secretion. Dispensable for general endosomal functions but crucial for endosomal recruitment of RRM4. The polypeptide is FYVE zinc finger domain protein UPA1 (Mycosarcoma maydis (Corn smut fungus)).